We begin with the raw amino-acid sequence, 701 residues long: Elongation factor G (701 aa).

The tr-type G domain occupies 11-287 (TKVRNIGIMA…AVIDYLPSPL (277 aa)). Residues 20 to 27 (AHIDAGKT), 84 to 88 (DTPGH), and 138 to 141 (NKMD) contribute to the GTP site.

Belongs to the TRAFAC class translation factor GTPase superfamily. Classic translation factor GTPase family. EF-G/EF-2 subfamily.

The protein localises to the cytoplasm. Functionally, catalyzes the GTP-dependent ribosomal translocation step during translation elongation. During this step, the ribosome changes from the pre-translocational (PRE) to the post-translocational (POST) state as the newly formed A-site-bound peptidyl-tRNA and P-site-bound deacylated tRNA move to the P and E sites, respectively. Catalyzes the coordinated movement of the two tRNA molecules, the mRNA and conformational changes in the ribosome. In Mycobacterium leprae (strain Br4923), this protein is Elongation factor G.